The chain runs to 89 residues: Large ribosomal subunit protein bL27 (89 aa).

The tract at residues 1 to 26 is disordered; it reads MATKKAGGSSKNGRDSAGRRLGLKKT.

It belongs to the bacterial ribosomal protein bL27 family.

The protein is Large ribosomal subunit protein bL27 of Orientia tsutsugamushi (strain Boryong) (Rickettsia tsutsugamushi).